The primary structure comprises 430 residues: Glutamate-1-semialdehyde 2,1-aminomutase 2 (430 aa).

Position 268 is an N6-(pyridoxal phosphate)lysine (lysine 268).

It belongs to the class-III pyridoxal-phosphate-dependent aminotransferase family. HemL subfamily. Homodimer. Pyridoxal 5'-phosphate is required as a cofactor.

The protein resides in the cytoplasm. The catalysed reaction is (S)-4-amino-5-oxopentanoate = 5-aminolevulinate. The protein operates within porphyrin-containing compound metabolism; protoporphyrin-IX biosynthesis; 5-aminolevulinate from L-glutamyl-tRNA(Glu): step 2/2. The sequence is that of Glutamate-1-semialdehyde 2,1-aminomutase 2 from Shouchella clausii (strain KSM-K16) (Alkalihalobacillus clausii).